A 381-amino-acid polypeptide reads, in one-letter code: Anhydro-N-acetylmuramic acid kinase (381 aa).

13–20 serves as a coordination point for ATP; the sequence is GTSLDGID.

It belongs to the anhydro-N-acetylmuramic acid kinase family.

The catalysed reaction is 1,6-anhydro-N-acetyl-beta-muramate + ATP + H2O = N-acetyl-D-muramate 6-phosphate + ADP + H(+). The protein operates within amino-sugar metabolism; 1,6-anhydro-N-acetylmuramate degradation. It functions in the pathway cell wall biogenesis; peptidoglycan recycling. Functionally, catalyzes the specific phosphorylation of 1,6-anhydro-N-acetylmuramic acid (anhMurNAc) with the simultaneous cleavage of the 1,6-anhydro ring, generating MurNAc-6-P. Is required for the utilization of anhMurNAc either imported from the medium or derived from its own cell wall murein, and thus plays a role in cell wall recycling. This is Anhydro-N-acetylmuramic acid kinase from Francisella tularensis subsp. novicida (strain U112).